The primary structure comprises 899 residues: Tubulin glycylase 3F (899 aa).

The 365-residue stretch at 471 to 835 (FKDVIQIIKN…TEYYQIQNWK (365 aa)) folds into the TTL domain. ATP is bound by residues 642-645 (QKYI), Lys663, and Asp665.

It is found in the cytoplasm. It localises to the cytoskeleton. The protein localises to the cilium basal body. Probable glycylase which modifies tubulin, generating side chains of glycine on the gamma-carboxyl groups of specific glutamate residues within the C-terminal tail of tubulin. In Tetrahymena thermophila (strain SB210), this protein is Tubulin glycylase 3F (TTLL3F).